The chain runs to 87 residues: DNA-directed RNA polymerase subunit omega (87 aa).

This sequence belongs to the RNA polymerase subunit omega family. In terms of assembly, the RNAP catalytic core consists of 2 alpha, 1 beta, 1 beta' and 1 omega subunit. When a sigma factor is associated with the core the holoenzyme is formed, which can initiate transcription.

The catalysed reaction is RNA(n) + a ribonucleoside 5'-triphosphate = RNA(n+1) + diphosphate. Its function is as follows. Promotes RNA polymerase assembly. Latches the N- and C-terminal regions of the beta' subunit thereby facilitating its interaction with the beta and alpha subunits. The chain is DNA-directed RNA polymerase subunit omega from Pseudomonas fluorescens (strain ATCC BAA-477 / NRRL B-23932 / Pf-5).